The sequence spans 102 residues: Secretoglobin family 1D member (102 aa).

Residues 1-21 (MRLSVTALLVTLALCYYEANA) form the signal peptide. Asn87 is a glycosylation site (N-linked (GlcNAc...) asparagine).

This sequence belongs to the secretoglobin family. Lipophilin subfamily.

The protein resides in the secreted. Functionally, may bind androgens and other steroids. May be under transcriptional regulation of steroid hormones. This is Secretoglobin family 1D member (SCGB1D) from Bos taurus (Bovine).